A 76-amino-acid polypeptide reads, in one-letter code: Signal recognition particle 9 kDa protein (76 aa).

This sequence belongs to the SRP9 family. Heterodimer with SRP14; binds RNA as heterodimer. Component of a signal recognition particle complex that consists of a 7SL RNA molecule of 300 nucleotides and six protein subunits: srpa-72, srpa-68, SRP54, F37F2.2/SRP19, F25G6.8/SRP14 and ZK512.4/SRP9.

The protein resides in the cytoplasm. Functionally, component of the signal recognition particle (SRP) complex, a ribonucleoprotein complex that mediates the cotranslational targeting of secretory and membrane proteins to the endoplasmic reticulum (ER). SRP9 together with SRP14 and the Alu portion of the SRP RNA, constitutes the elongation arrest domain of SRP. The complex of SRP9 and SRP14 is required for SRP RNA binding. The protein is Signal recognition particle 9 kDa protein of Caenorhabditis elegans.